A 320-amino-acid polypeptide reads, in one-letter code: ATP-dependent 6-phosphofructokinase (320 aa).

Position 11 (Gly-11) interacts with ATP. ADP is bound at residue 21-25 (RAVVR). ATP contacts are provided by residues 72-73 (RC) and 102-105 (GDGS). Asp-103 provides a ligand contact to Mg(2+). 125 to 127 (TID) serves as a coordination point for substrate. The Proton acceptor role is filled by Asp-127. Arg-154 is an ADP binding site. Substrate contacts are provided by residues Arg-162 and 169–171 (MGR). Residues 185–187 (GAE) and 214–216 (KTH) each bind ADP. Substrate contacts are provided by residues Glu-223, Arg-244, and 250 to 253 (HIQR).

This sequence belongs to the phosphofructokinase type A (PFKA) family. ATP-dependent PFK group I subfamily. Prokaryotic clade 'B1' sub-subfamily. As to quaternary structure, homotetramer. The cofactor is Mg(2+).

It is found in the cytoplasm. It catalyses the reaction beta-D-fructose 6-phosphate + ATP = beta-D-fructose 1,6-bisphosphate + ADP + H(+). It functions in the pathway carbohydrate degradation; glycolysis; D-glyceraldehyde 3-phosphate and glycerone phosphate from D-glucose: step 3/4. Allosterically activated by ADP and other diphosphonucleosides, and allosterically inhibited by phosphoenolpyruvate. Catalyzes the phosphorylation of D-fructose 6-phosphate to fructose 1,6-bisphosphate by ATP, the first committing step of glycolysis. The protein is ATP-dependent 6-phosphofructokinase of Clostridium botulinum (strain Alaska E43 / Type E3).